Reading from the N-terminus, the 446-residue chain is Trigger factor (446 aa).

A PPIase FKBP-type domain is found at 163–248 (GDRLVIDFEG…VKEIKKKNLL (86 aa)).

It belongs to the FKBP-type PPIase family. Tig subfamily.

It is found in the cytoplasm. It carries out the reaction [protein]-peptidylproline (omega=180) = [protein]-peptidylproline (omega=0). Its function is as follows. Involved in protein export. Acts as a chaperone by maintaining the newly synthesized protein in an open conformation. Functions as a peptidyl-prolyl cis-trans isomerase. The protein is Trigger factor of Natranaerobius thermophilus (strain ATCC BAA-1301 / DSM 18059 / JW/NM-WN-LF).